The sequence spans 1367 residues: METQLQSIFEEVVKTEIIEEAFPGMFMDTPEDEKTKLISCLAAFRQFWNGLSQESHEQCVQWIVKFIHGQHSPKRISFLYDCLAMAVETGLLPPRMVCESLINSDTLEWERTQLWALTFKLVRKIIGGVDYKGVRDLLKVILEKILTIPNTVSSAVVQQLLAAREVIAYILERNACLLPAYFAVTEIRKLYPEGKLPHWLLGNLVSDFVDTFRPTARINSICGRCSLLPVVNNSGAICNSWKLDPATLRFPLKGLLPYDKDLFEPQTALLRYVLEQPYSRDMVCNMLGLNKQHKQRCPVLEDQLVDLVVYAMERSETEEKFDDGGTSQLLWQHLSSQLIFFVLFQFASFPHMVLSLHQKLAGRGLIKGRDHLMWVLLQFISGSIQKNALADFLPVMKLFDLLYPEKECIPVPDINKPQSTHAFAMTCIWIHLNRKAQNDNSKLQIPIPHSLKLHHEFLQQSLRNKSLQMNDYKIALLCNAYSTNSECFTLPMGALVETIYGNGIMRVPLPGTSCLASASVTPLPMNLLDSLTVHAKMSLIHSIATRVIKLAHTKSSVALAPALVETYSRLLVYMEIESLGIKGFISQLLPTVFKSHAWGILHTLLEMFSHRMHHIQPHYRVQLLSHLHTLAAVAQTNQNQLHLCVESTALRLITALGSSEVQPQFTRFLNDPKTVLSAESEELNRALILTLARATHVTDFFTGSDSIQGTWCKDILQTIMTFTPHNWASHTLSCFPAPLQAFFKQNNVPQESRFNLKKNVEEEYRKWKSMTDENEIITQFSMQGFPPLFLCLLWKMLLETDHISQIGYKVLERIGARALVAHVRTFADFLVYEFSTSAGGQQLNKCIEILNDMVWKYNIVTLDRLILCLAMRSHEGNEAQVCYFIIQLLLLKPNDFRNRVSDFVKENSPEHWLQSDWHTKHMSYHKKYPEKLYFEGLAEQVDPPVPIQSPYLPIYFGNVCLRFLPVFDIVIHRFLELLPVSKSLETLLDHLGGLYKFHDRPVTYLYNTLHYYEMCLRNRDHLKRKLVHAIIGSLKDNRPQGWCLSDTYLKHAMNAREDNPWVPEDSYYCKLIGRLVDTMAGKSPGPFPNCDWRFNEFPNPAAHALHVTCVELMALAVPGKDVGNALLNVVLKSQPLVPRENITAWMNAIGLIITALPEPYWIVLHDRIVSVISSSSLTSETEWVGYPFRLFDFTACHQSYSEMSCSYTLALAHAVWHHSSIGQLSLIPKFLTEVLLPVVKTEFQLLYVYHLVGPFLQRFQQERTRCMIEIGVAFYDMLLNVDQCSTHLNYMDPICDFLYHMKYMFTGDSVKEQVEKIICNLKPALKLRLRFITHISKMEPAVPPQALSSGSPAPQANQVPTALPVTQ.

Positions 1343–1367 (PPQALSSGSPAPQANQVPTALPVTQ) are disordered. Over residues 1346–1367 (ALSSGSPAPQANQVPTALPVTQ) the composition is skewed to polar residues.

This sequence belongs to the Mediator complex subunit 23 family. As to quaternary structure, component of the Mediator complex, which is composed of MED1, MED4, MED6, MED7, MED8, MED9, MED10, MED11, MED12, MED13, MED13L, MED14, MED15, MED16, MED17, MED18, MED19, MED20, MED21, MED22, MED23, MED24, MED25, MED26, MED27, MED29, MED30, MED31, CCNC, CDK8 and CDC2L6/CDK11. The MED12, MED13, CCNC and CDK8 subunits form a distinct module termed the CDK8 module. Mediator containing the CDK8 module is less active than Mediator lacking this module in supporting transcriptional activation. Individual preparations of the Mediator complex lacking one or more distinct subunits have been variously termed ARC, CRSP, DRIP, PC2, SMCC and TRAP. Interacts with CDK8, CEBPB, CTNNB1, ELK1 and GLI3. Interacts with the adenovirus E1A protein.

Its subcellular location is the nucleus. Functionally, component of the Mediator complex, a coactivator involved in the regulated transcription of nearly all RNA polymerase II-dependent genes. Mediator functions as a bridge to convey information from gene-specific regulatory proteins to the basal RNA polymerase II transcription machinery. Mediator is recruited to promoters by direct interactions with regulatory proteins and serves as a scaffold for the assembly of a functional pre-initiation complex with RNA polymerase II and the general transcription factors. Also required for transcriptional activation subsequent to the assembly of the pre-initiation complex. Required for transcriptional activation by adenovirus E1A protein. Required for ELK1-dependent transcriptional activation in response to activated Ras signaling. This Rattus norvegicus (Rat) protein is Mediator of RNA polymerase II transcription subunit 23 (Med23).